A 324-amino-acid polypeptide reads, in one-letter code: Cytochrome c biogenesis protein CcsA (324 aa).

Helical transmembrane passes span 15–35, 44–64, 71–91, 98–118, 143–163, 228–248, 255–275, and 289–309; these read FSIV…DEII, GMIA…IYSG, LYES…VPYF, LSTI…SGLL, MILG…LLVL, VISL…VWAN, WNWD…AVYL, and AIVA…VNLL.

It belongs to the CcmF/CycK/Ccl1/NrfE/CcsA family. May interact with Ccs1.

It localises to the plastid. Its subcellular location is the chloroplast thylakoid membrane. In terms of biological role, required during biogenesis of c-type cytochromes (cytochrome c6 and cytochrome f) at the step of heme attachment. The sequence is that of Cytochrome c biogenesis protein CcsA from Daucus carota (Wild carrot).